The primary structure comprises 446 residues: Probable D-serine dehydratase (446 aa).

Residue K116 is modified to N6-(pyridoxal phosphate)lysine.

The protein belongs to the serine/threonine dehydratase family. DsdA subfamily. Pyridoxal 5'-phosphate serves as cofactor.

The enzyme catalyses D-serine = pyruvate + NH4(+). In Bacillus cereus (strain 03BB102), this protein is Probable D-serine dehydratase.